The primary structure comprises 225 residues: Non-structural protein V (225 aa).

The tract at residues P65 to K72 is nuclear localization signal. Residues S145 to D157 show a composition bias toward polar residues. Residues S145–N173 are disordered. The Zn(2+) site is built by H174, C193, C197, C209, C211, C214, C218, and C221.

Belongs to the paramyxoviruses V protein family. As to quaternary structure, interacts with host IFIH1/MDA5 and DHX58/LGP2. Forms with host DDB1, CUL4A, STAT1 and STAT2 the HPIV2 virus V-dependent complex (VDC); this complex targets host STAT2 to proteasomal degradation.

It localises to the host nucleus. In terms of biological role, plays an essential role in the inhibition of host immune response. Prevents the establishment of cellular antiviral state by blocking interferon-alpha/beta (IFN-alpha/beta) production and signaling pathway. Interacts with host IFIH1/MDA5 and DHX58/LGP2 to inhibit the transduction pathway involved in the activation of IFN-beta promoter, thus protecting the virus against cell antiviral state. Efficiently blocks type I IFN signaling following infection by targeting host STAT2 for proteasomal degradation. Also plays a role in viral growth by promoting host RhoA-induced F-actin formation. The sequence is that of Non-structural protein V (P/V) from Homo sapiens (Human).